The primary structure comprises 1339 residues: MEDWVSCRSEEQKRCEEKGQSTFDESEEEQWRRLKEEAMIDSDDSEGAAGDEGAVVLAEAKRRKPRKSGKVIATQKCAQPQNQHRHQQKLTKSLSTYDMENLLKQYRNISAEEEDEVDVDITKFLQDDGVDSEDGEGPSVTATELLSSLISGRSADTNKTEELADSFPLANLNDEVFTYENEAAVKKTPRNKEKRTNKSGANYVIKETVVEELNVVTDLAEVRTGSQHASTDFLNGCPPKALFYWFDAKEQPHTLTAPGTILLFGKVCMNEEDEEFRSCCVRIQHVHRNVFLLPKEGSTDAEVVQEINAICRGSGIEERRIKFVERYYAFEEPGVPREKNRWAKLVYPGRYPPFPNKGGLTHVQVVVGASRSLLELFLIKKRLMGPSYLEIEHLVTAMDRVSHCKTEFLVPSPKDIKVYNSSKPPPPFTVASIQLHAQLDSDGVKNEVIAASIALYGDVSIDGERKPNITECFTGVRQLSPDAPLPLDLETYCLSKRMPGVHRFINERALLTWFAETLAALDPDIIVGHNIIGYTVETLLNRYQELNIVRWSTIGRLDVRRFPRIQGNNFNLAIEKEACVGRLVVDTYLLAREYYKSTNYKLLSLSTQMEIKGITDNRGHFEPGSTVLVKDSMMSSEALCPILLQLLNCAVLSFNVASFLDVIPLTKRLTLLAGNLWSRTLYGARSERIEYLLLHAFHNLKFVTPDKKKRDLKRGREDDDDEGKRKTKYQGGMVLEPKSGLYSEYILLLDFNSLYPSLIQEFNVCYTTIDRDENTVSAEVPPPESLICLSCRAAGLPSPCLHKCILPKVIRGLVDSRREIKRMMKSEKDPGNLAMLEIRQLALKLTANSMYGCLGFEYSRFYAQPLAELVTRQGRLALQNTVELIPQISPSIRVIYGDTDSVMIQTGIKDDIVKVRNLGFEIKGKVNQRYQSLELDIDGVFRAMLLLRKKKYAALSVVDWQGEGKVYKREVKGLDMVRRDWCPLSQHVSDAVLKRILNAEGGEDILDFVIKYMKGVAQDVRSGNVYPLEEFVISKSLTKEPESYHGTGYPHAVVALRMKQRKEGVRVGDLIPYVICEGDEHIDDKAYHIDEVRRSDGLSVDVEWYLSSQLYPPVMRLCEHIQGFVPEQLSEAMCIASHMRTERDVKEEDTANDFSHCSIFKSRALSECFPTATALQVQCTHCQLVVPVDPHKYINDMFSSREKPPPTAPFELYVCFNCGRSLPLAYLANCMTQMCHTIIRQFYCSGGNVASVRALRAQFTYLRAMFDVPQALNCPSAVKNAHRVLSLRCLGTDRKLYTLADVERFPDVEPVDPLLACAESFYRRIDHLFVSLDKLFDTP.

Disordered regions lie at residues 1 to 29 and 60 to 89; these read MEDW…SEEE and AKRR…HQQK. Residues 8-19 are compositionally biased toward basic and acidic residues; sequence RSEEQKRCEEKG. The Zn(2+) site is built by Cys-1179, Cys-1182, Cys-1215, Cys-1218, Cys-1235, Cys-1244, Cys-1274, and Cys-1289. The CysA-type zinc finger occupies 1179 to 1218; the sequence is CTHCQLVVPVDPHKYINDMFSSREKPPPTAPFELYVCFNC. The CysB motif signature appears at 1244 to 1274; sequence CSGGNVASVRALRAQFTYLRAMFDVPQALNC.

It belongs to the DNA polymerase type-B family.

Its subcellular location is the nucleus. The enzyme catalyses DNA(n) + a 2'-deoxyribonucleoside 5'-triphosphate = DNA(n+1) + diphosphate. In terms of biological role, polymerase alpha in a complex with DNA primase is a replicative polymerase. This chain is DNA polymerase alpha catalytic subunit, found in Trypanosoma brucei brucei.